The chain runs to 220 residues: Deoxyribose-phosphate aldolase 2 (220 aa).

Asp89 acts as the Proton donor/acceptor in catalysis. Residue Lys151 is the Schiff-base intermediate with acetaldehyde of the active site. The active-site Proton donor/acceptor is Lys180.

It belongs to the DeoC/FbaB aldolase family. DeoC type 1 subfamily.

The protein localises to the cytoplasm. The enzyme catalyses 2-deoxy-D-ribose 5-phosphate = D-glyceraldehyde 3-phosphate + acetaldehyde. It participates in carbohydrate degradation; 2-deoxy-D-ribose 1-phosphate degradation; D-glyceraldehyde 3-phosphate and acetaldehyde from 2-deoxy-alpha-D-ribose 1-phosphate: step 2/2. In terms of biological role, catalyzes a reversible aldol reaction between acetaldehyde and D-glyceraldehyde 3-phosphate to generate 2-deoxy-D-ribose 5-phosphate. This is Deoxyribose-phosphate aldolase 2 from Staphylococcus aureus (strain COL).